Reading from the N-terminus, the 628-residue chain is E3 SUMO-protein ligase PIAS3 (628 aa).

The segment at M1–S200 is interaction with CCAR2. In terms of domain architecture, SAP spans V11–L45. Residues L19–L23 carry the LXXLL motif motif. Glycyl lysine isopeptide (Lys-Gly) (interchain with G-Cter in SUMO2) cross-links involve residues K46, K56, K230, and K307. The 166-residue stretch at M115 to L280 folds into the PINIT domain. The SP-RING-type zinc-finger motif lies at P312 to D393. Zn(2+) contacts are provided by C343, H345, C366, and C369. The tract at residues L450–D460 is SUMO1-binding. Residues K466 and K482 each participate in a glycyl lysine isopeptide (Lys-Gly) (interchain with G-Cter in SUMO2) cross-link. The tract at residues G571–D628 is disordered.

Belongs to the PIAS family. Monomer. Interacts with PLAG1 and ZFHX3. Interacts with STAT5A; the interaction occurs on stimulation by PRL. Binds SUMO1 and UBE2I. Interacts with AR, BCL11A, HMGA2, IRF1 and NCOA2. Interacts with MITF; the interaction inhibits the transcriptional activity of MITF. Interacts with STAT3; the interaction occurs on stimulation by IL6, CNTF or OSM and inhibits the DNA binding activity of STAT3. Interacts with GFI1; the interaction relieves the inhibitory effect of PIAS3 on STAT3-mediated transcriptional activity. Interacts with MTA1. Interacts with CCAR2 (via N-terminus). Interacts with TRIM8. Interacts with PRDM1. Post-translationally, sumoylated. Expressed in kidney, heart, spleen, brain and cerebellum; weak expression, if any, in liver and lung.

It is found in the cytoplasm. Its subcellular location is the nucleus. It localises to the nucleus speckle. It participates in protein modification; protein sumoylation. In terms of biological role, functions as an E3-type small ubiquitin-like modifier (SUMO) ligase, stabilizing the interaction between UBE2I and the substrate, and as a SUMO-tethering factor. Plays a crucial role as a transcriptional coregulation in various cellular pathways, including the STAT pathway and the steroid hormone signaling pathway. Repressor of STAT3 signaling via inhibiting STAT3 DNA-binding and suppressing cell growth. Repressor of MITF transcriptional activity. Enhances the sumoylation of MTA1 and may participate in its paralog-selective sumoylation. Sumoylates CCAR2 which promotes its interaction with SIRT1. Diminishes the sumoylation of ZFHX3 by preventing the colocalization of ZFHX3 with SUMO1 in the nucleus. This Mus musculus (Mouse) protein is E3 SUMO-protein ligase PIAS3 (Pias3).